Consider the following 648-residue polypeptide: Leucine aminopeptidase 2 (648 aa).

A peptide contacts are provided by residues glutamine 143–glutamine 145 and proline 269–glutamate 274. Histidine 298 contacts Zn(2+). The active-site Proton acceptor is the glutamate 299. Zn(2+) is bound by residues histidine 302 and glutamate 321. Tyrosine 408 (proton donor) is an active-site residue.

This sequence belongs to the peptidase M1 family. Zn(2+) serves as cofactor.

It localises to the cytoplasm. It is found in the nucleus. The catalysed reaction is an epoxide + H2O = an ethanediol. Aminopeptidase that preferentially cleaves di- and tripeptides. Also has low epoxide hydrolase activity (in vitro). Can hydrolyze the epoxide leukotriene LTA(4) but it forms preferentially 5,6-dihydroxy-7,9,11,14-eicosatetraenoic acid rather than the cytokine leukotriene B(4) as the product compared to the homologous mammalian enzyme (in vitro). The chain is Leucine aminopeptidase 2 from Lodderomyces elongisporus (strain ATCC 11503 / CBS 2605 / JCM 1781 / NBRC 1676 / NRRL YB-4239) (Yeast).